We begin with the raw amino-acid sequence, 315 residues long: Calumenin (315 aa).

The first 19 residues, 1 to 19, serve as a signal peptide directing secretion; it reads MDTRRLLLCLCLWVACVVS. EF-hand domains follow at residues 68–103, 104–139, 151–186, 188–223, 229–264, and 265–300; these read ESKERLGMIVSKIDLDNDGYVTEGELTAWIKKAQKK, YVYDNVERQWQEFDLNQDGLVSWDEYRNVTYGTYLD, QMMVRDERRFKMADQDGDLIATKEEFTAFLHPEEFD, MKDIVVLETMEDIDKNGDGLIDLEEYIGDMYNHDGD, WVKTEREQFVEFRDKNHDGKMDKEETKDWILPSDYD, and HAEAESRHLVYESDQNKDSKLTREEIVDKYDLFVGS. Ca(2+) is bound by residues aspartate 81, aspartate 83, aspartate 85, tyrosine 87, glutamate 92, aspartate 117, asparagine 119, aspartate 121, and glutamate 128. An N-linked (GlcNAc...) asparagine glycan is attached at asparagine 131. Positions 164, 166, 168, 175, 201, 203, 205, 212, 242, 244, 246, 248, 253, 278, 280, 282, 284, and 289 each coordinate Ca(2+). Positions 312-315 match the Prevents secretion from ER motif; the sequence is HDEF.

This sequence belongs to the CREC family. Interacts with ggcx.

It localises to the endoplasmic reticulum membrane. The protein localises to the golgi apparatus. It is found in the secreted. The protein resides in the melanosome. Its subcellular location is the sarcoplasmic reticulum lumen. Involved in regulation of vitamin K-dependent carboxylation of multiple N-terminal glutamate residues. Seems to inhibit gamma-carboxylase ggcx. Binds 7 calcium ions with a low affinity. The polypeptide is Calumenin (calu) (Xenopus tropicalis (Western clawed frog)).